Consider the following 545-residue polypeptide: Transducer protein Htr7 (545 aa).

3 helical membrane-spanning segments follow: residues 10 to 30 (AVVA…AAAL), 44 to 64 (FWMA…SLML), and 80 to 100 (PLMA…LAIV). Residues 111–157 (AQRRQEAEEERAEAERAREKAEQKQAEAERQTAEAESAKQDARERSA) are disordered. Basic and acidic residues predominate over residues 123–157 (EAERAREKAEQKQAEAERQTAEAESAKQDARERSA). The region spanning 164–217 (ADLESQATEVGATLEAASDGDLTARVDATTDNAEIAEVATVVNDMLTTMERTID) is the HAMP domain. The Methyl-accepting transducer domain occupies 236 to 476 (GAKEIQDASQ…RVVSSVDDIA (241 aa)). Residue Glu-281 is modified to Glutamate methyl ester (Glu). Positions 521-545 (LNEFRTEATGTAHGEATDAPAGQSD) are disordered. Low complexity predominate over residues 527-539 (EATGTAHGEATDA).

This sequence belongs to the methyl-accepting chemotaxis (MCP) protein family. Methylated by CheR.

Its subcellular location is the cell membrane. In terms of biological role, potentially involved in chemo- or phototactic signal transduction. In Halobacterium salinarum (strain ATCC 29341 / DSM 671 / R1), this protein is Transducer protein Htr7 (htr7).